Reading from the N-terminus, the 133-residue chain is ATP synthase epsilon chain (133 aa).

It belongs to the ATPase epsilon chain family. F-type ATPases have 2 components, CF(1) - the catalytic core - and CF(0) - the membrane proton channel. CF(1) has five subunits: alpha(3), beta(3), gamma(1), delta(1), epsilon(1). CF(0) has three main subunits: a, b and c.

It is found in the cell membrane. Functionally, produces ATP from ADP in the presence of a proton gradient across the membrane. This is ATP synthase epsilon chain from Lawsonia intracellularis (strain PHE/MN1-00).